The following is an 859-amino-acid chain: Magnesium transporter ALR1 (859 aa).

Residues 1-20 (MSSSSSSSESSPNLSRSNSL) show a composition bias toward low complexity. Disordered stretches follow at residues 1–281 (MSSS…MPPQ) and 330–399 (TSST…NIPS). Serine 2 is modified (N-acetylserine). 2 stretches are compositionally biased toward basic and acidic residues: residues 28 to 42 (KTEDHTGLYDHRQHP) and 55 to 73 (KNKEIAKSTKPSIPKEQKS). Tyrosine 77 is subject to Phosphotyrosine. Serine 85 carries the post-translational modification Phosphoserine. Positions 144 to 154 (PPKDVGVKRDY) are enriched in basic and acidic residues. Residues 157–176 (SSSTASSGNKSKLSASSSAS) show a composition bias toward low complexity. Phosphoserine is present on residues serine 185 and serine 188. Positions 193-203 (IPHESKSDTHS) are enriched in basic and acidic residues. Residues 213 to 235 (YSTTSAHSSINPAVLLTKSTSQK) show a composition bias toward polar residues. Serine 220, serine 221, and serine 236 each carry phosphoserine. Position 242 is a phosphothreonine (threonine 242). The span at 252-265 (TRASFDSDVSQASR) shows a compositional bias: polar residues. Over residues 330–339 (TSSTSTSGSS) the composition is skewed to low complexity. Over residues 353-375 (EKSESTNETEIHEKKEDEHEKIK) the composition is skewed to basic and acidic residues. Transmembrane regions (helical) follow at residues 744-764 (TMIGTMLVPLNVITGLFGMNV) and 773-793 (IAWWFGILGVLLLLAVLGWFL). Residues 830–859 (FNDRSKNINVRAGPSNKSVASLPSRYSRYD) form a disordered region. The residue at position 850 (serine 850) is a Phosphoserine.

It belongs to the CorA metal ion transporter (MIT) (TC 1.A.35) family.

It localises to the cell membrane. Functionally, plasma membrane magnesium transporter. In Saccharomyces cerevisiae (strain ATCC 204508 / S288c) (Baker's yeast), this protein is Magnesium transporter ALR1 (ALR1).